The primary structure comprises 343 residues: Heat-inducible transcription repressor HrcA (343 aa).

It belongs to the HrcA family.

Negative regulator of class I heat shock genes (grpE-dnaK-dnaJ and groELS operons). Prevents heat-shock induction of these operons. The chain is Heat-inducible transcription repressor HrcA from Natranaerobius thermophilus (strain ATCC BAA-1301 / DSM 18059 / JW/NM-WN-LF).